The primary structure comprises 280 residues: UPF0494 membrane protein C750.06c (280 aa).

Transmembrane regions (helical) follow at residues Trp-107–Val-127, Ile-144–Phe-164, Val-178–Ile-198, and Ala-199–Gly-219.

The protein belongs to the UPF0494 family.

It localises to the cytoplasm. It is found in the vacuole. The protein resides in the membrane. This is UPF0494 membrane protein C750.06c from Schizosaccharomyces pombe (strain 972 / ATCC 24843) (Fission yeast).